Consider the following 431-residue polypeptide: 5-methylthioadenosine/S-adenosylhomocysteine deaminase (431 aa).

2 residues coordinate Zn(2+): His-64 and His-66. Residues Glu-93, Arg-145, and His-183 each contribute to the substrate site. Residue His-210 participates in Zn(2+) binding. Positions 213 and 299 each coordinate substrate. Residue Asp-299 coordinates Zn(2+).

The protein belongs to the metallo-dependent hydrolases superfamily. MTA/SAH deaminase family. The cofactor is Zn(2+).

It catalyses the reaction S-adenosyl-L-homocysteine + H2O + H(+) = S-inosyl-L-homocysteine + NH4(+). The catalysed reaction is S-methyl-5'-thioadenosine + H2O + H(+) = S-methyl-5'-thioinosine + NH4(+). Functionally, catalyzes the deamination of 5-methylthioadenosine and S-adenosyl-L-homocysteine into 5-methylthioinosine and S-inosyl-L-homocysteine, respectively. Is also able to deaminate adenosine. In Syntrophomonas wolfei subsp. wolfei (strain DSM 2245B / Goettingen), this protein is 5-methylthioadenosine/S-adenosylhomocysteine deaminase.